Reading from the N-terminus, the 252-residue chain is Sugar fermentation stimulation protein homolog (252 aa).

The protein belongs to the SfsA family.

The protein is Sugar fermentation stimulation protein homolog of Picosynechococcus sp. (strain ATCC 27264 / PCC 7002 / PR-6) (Agmenellum quadruplicatum).